Here is a 380-residue protein sequence, read N- to C-terminus: Erythronate-4-phosphate dehydrogenase (380 aa).

2 residues coordinate substrate: S45 and T66. Position 146 (D146) interacts with NAD(+). The active site involves R207. D232 lines the NAD(+) pocket. E237 is a catalytic residue. H254 (proton donor) is an active-site residue. An NAD(+)-binding site is contributed by G257. Y258 is a binding site for substrate.

Belongs to the D-isomer specific 2-hydroxyacid dehydrogenase family. PdxB subfamily. As to quaternary structure, homodimer.

The protein localises to the cytoplasm. It carries out the reaction 4-phospho-D-erythronate + NAD(+) = (R)-3-hydroxy-2-oxo-4-phosphooxybutanoate + NADH + H(+). The protein operates within cofactor biosynthesis; pyridoxine 5'-phosphate biosynthesis; pyridoxine 5'-phosphate from D-erythrose 4-phosphate: step 2/5. Its function is as follows. Catalyzes the oxidation of erythronate-4-phosphate to 3-hydroxy-2-oxo-4-phosphonooxybutanoate. In Marinomonas sp. (strain MWYL1), this protein is Erythronate-4-phosphate dehydrogenase.